Here is a 169-residue protein sequence, read N- to C-terminus: MSSRNNPARVAIVMGSKSDWATMQFAAEIFEILNVPHHVEVVSAHRTPDKLFSFAESAEENGYQVIIAGAGGAAHLPGMIAAKTLVPVLGVPVQSAALSGVDSLYSIVQMPRGIPVGTLAIGKAGAANAALLAAQILATHDKELHQRLNDWRKAQTDEVLENPDPRGAA.

Residues Ser-16, Asp-19, and Arg-46 each coordinate substrate.

Belongs to the AIR carboxylase family. Class I subfamily.

It catalyses the reaction 5-carboxyamino-1-(5-phospho-D-ribosyl)imidazole + H(+) = 5-amino-1-(5-phospho-D-ribosyl)imidazole-4-carboxylate. The protein operates within purine metabolism; IMP biosynthesis via de novo pathway; 5-amino-1-(5-phospho-D-ribosyl)imidazole-4-carboxylate from 5-amino-1-(5-phospho-D-ribosyl)imidazole (N5-CAIR route): step 2/2. Functionally, catalyzes the conversion of N5-carboxyaminoimidazole ribonucleotide (N5-CAIR) to 4-carboxy-5-aminoimidazole ribonucleotide (CAIR). This is N5-carboxyaminoimidazole ribonucleotide mutase from Escherichia coli O157:H7.